Reading from the N-terminus, the 200-residue chain is MAGLKQHSGLVVPLDAANVDTDAIIPKQFLQAITRVGFGKHLFHEWRYLDAEETRLNPDFVLNFPQYQGATILLTRKNLGCGSSREHAPWALADYGFKVMIAPSFADIFYNNSLNNHMLPIRLSEEEVEEIFQWVWANEGKQIHIDLEAMTVTVGDKIYRFELDEFRRHCLLNGLDNIGLTLQHEDAITAYESKIPAFLR.

The protein belongs to the LeuD family. LeuD type 1 subfamily. Heterodimer of LeuC and LeuD.

The catalysed reaction is (2R,3S)-3-isopropylmalate = (2S)-2-isopropylmalate. It participates in amino-acid biosynthesis; L-leucine biosynthesis; L-leucine from 3-methyl-2-oxobutanoate: step 2/4. Its function is as follows. Catalyzes the isomerization between 2-isopropylmalate and 3-isopropylmalate, via the formation of 2-isopropylmaleate. The polypeptide is 3-isopropylmalate dehydratase small subunit (Actinobacillus pleuropneumoniae serotype 5b (strain L20)).